The sequence spans 461 residues: V-type ATP synthase beta chain (461 aa).

The protein belongs to the ATPase alpha/beta chains family.

Produces ATP from ADP in the presence of a proton gradient across the membrane. The V-type beta chain is a regulatory subunit. The polypeptide is V-type ATP synthase beta chain (Clostridium botulinum (strain Kyoto / Type A2)).